Consider the following 360-residue polypeptide: MKPSIVAKLEALHERHEEVQALLGDAGTIADQERFRALSREYAQLSDVSRCFTDWQQVQDDIETAQMMLDDPEMREMAQDELREAKEKGEQLEQQLQVLLLPKDPDDERNAFLEVRAGTGGDEAALFAGDLFRMYSRYAEARRWRVEIMSASEGEHGGYKEIIAKISGDGVYGRLKFESGGHRVQRVPATESQGRIHTSACTVAVMPELPEAELPDINPADLRIDTFRSSGAGGQHVNTTDSAIRITHLPTGIVVECQDERSQHKNKAKALSVLGARIHAAETAKRQQAEASTRRNLLGSGDRSDRNRTYNFPQGRVTDHRINLTLYRLDEAMEGKLDMLIEPIVQEHQADQLAALSEQE.

Q235 is modified (N5-methylglutamine). A disordered region spans residues 284–313; that stretch reads AKRQQAEASTRRNLLGSGDRSDRNRTYNFP.

It belongs to the prokaryotic/mitochondrial release factor family. Post-translationally, methylated by PrmC. Methylation increases the termination efficiency of RF1.

The protein resides in the cytoplasm. Functionally, peptide chain release factor 1 directs the termination of translation in response to the peptide chain termination codons UAG and UAA. This chain is Peptide chain release factor 1, found in Citrobacter koseri (strain ATCC BAA-895 / CDC 4225-83 / SGSC4696).